Here is a 436-residue protein sequence, read N- to C-terminus: MAETVVNVVGAGLAGSEAAYQLAQRGIKVNLIEMRPVRQTPAHHTDKFAELVCSNSLRGNSLTNAVGVLKEEMRRLDSLIIKAADAARVPAGGALAVDRHDFAGYITDTLKSHPNVNVINEEIESIPEGYTIIATGPLTTEGLAKEIVEITGEDQLYFYDAAAPIIEKESIDMDKVYLKSRYDKGEAAYLNCPMTEEEFDRFYDAVLEAEAAPVNEFEKEKYFEGCMPFEVMAERGRKTLLFGPMKPVGLEDPKTGKRPFAVVQLRQDDAAGTLYNIVGFQTHLKWGAQKEVIRLIPGLENVDIVRYGVMHRNTFINSPDVLSETYQLKGNDHLYFAGQMTGVEGYVESAASGLVAGINVAHKLQDKAEVVFPRETMIGSMAYYISHANNNKNFQPMNANFGLVPSLEKRIKDKKERYEQQANRALTYLENFKQTL.

Residue 10–15 participates in FAD binding; sequence GAGLAG.

The protein belongs to the MnmG family. TrmFO subfamily. The cofactor is FAD.

Its subcellular location is the cytoplasm. It catalyses the reaction uridine(54) in tRNA + (6R)-5,10-methylene-5,6,7,8-tetrahydrofolate + NADH + H(+) = 5-methyluridine(54) in tRNA + (6S)-5,6,7,8-tetrahydrofolate + NAD(+). The enzyme catalyses uridine(54) in tRNA + (6R)-5,10-methylene-5,6,7,8-tetrahydrofolate + NADPH + H(+) = 5-methyluridine(54) in tRNA + (6S)-5,6,7,8-tetrahydrofolate + NADP(+). Catalyzes the folate-dependent formation of 5-methyl-uridine at position 54 (M-5-U54) in all tRNAs. The chain is Methylenetetrahydrofolate--tRNA-(uracil-5-)-methyltransferase TrmFO from Staphylococcus carnosus (strain TM300).